The primary structure comprises 179 residues: Large ribosomal subunit protein uL5 (179 aa).

Belongs to the universal ribosomal protein uL5 family. As to quaternary structure, part of the 50S ribosomal subunit; part of the 5S rRNA/L5/L18/L25 subcomplex. Contacts the 5S rRNA and the P site tRNA. Forms a bridge to the 30S subunit in the 70S ribosome.

In terms of biological role, this is one of the proteins that bind and probably mediate the attachment of the 5S RNA into the large ribosomal subunit, where it forms part of the central protuberance. In the 70S ribosome it contacts protein S13 of the 30S subunit (bridge B1b), connecting the 2 subunits; this bridge is implicated in subunit movement. Contacts the P site tRNA; the 5S rRNA and some of its associated proteins might help stabilize positioning of ribosome-bound tRNAs. The sequence is that of Large ribosomal subunit protein uL5 from Bacillus anthracis (strain A0248).